Reading from the N-terminus, the 63-residue chain is Large ribosomal subunit protein bL28c (63 aa).

Belongs to the bacterial ribosomal protein bL28 family.

It is found in the plastid. It localises to the chloroplast. This is Large ribosomal subunit protein bL28c (rpl28) from Porphyra purpurea (Red seaweed).